We begin with the raw amino-acid sequence, 303 residues long: uncharacterized protein (303 aa).

Residues 7–12 (GAGGVG) and N101 each bind NADP(+). K184 (proton donor) is an active-site residue. E267 is an NADP(+) binding site.

Belongs to the ketopantoate reductase family.

This is an uncharacterized protein from Bacillus subtilis (strain 168).